Consider the following 227-residue polypeptide: uncharacterized protein (227 aa).

A run of 7 helical transmembrane segments spans residues 25–45 (LLGF…NAGF), 49–69 (AAFG…YGMI), 80–100 (TGVT…GPVL), 111–131 (KIVG…SALA), 144–164 (FLTV…FLGI), 165–185 (PALA…MIMW), and 201–221 (AALT…NILL).

It localises to the cell membrane. This is an uncharacterized protein from Neisseria meningitidis serogroup B (strain ATCC BAA-335 / MC58).